Reading from the N-terminus, the 1044-residue chain is Carbamoyl phosphate synthase large chain (1044 aa).

The segment at 1–398 (MPKREDISKI…ALMKAIASLD (398 aa)) is carboxyphosphate synthetic domain. 12 residues coordinate ATP: Arg129, Arg169, Gly175, Gly176, Arg208, Leu210, Glu215, Gly241, Val242, His243, Gln284, and Glu296. An ATP-grasp 1 domain is found at 133–325 (HDFLISIGER…IARIAAKIAV (193 aa)). Mg(2+) is bound by residues Gln284, Glu296, and Asn298. Mn(2+) is bound by residues Gln284, Glu296, and Asn298. The oligomerization domain stretch occupies residues 399 to 539 (IDLSYRLRLY…YSTYEDEDEL (141 aa)). The segment at 540 to 916 (PGISGFVAII…AIRKSILRDI (377 aa)) is carbamoyl phosphate synthetic domain. The ATP-grasp 2 domain maps to 665–854 (SKRLEAMGID…WVELAVSAIM (190 aa)). ATP contacts are provided by Arg701, Lys738, Leu740, Glu745, Gly770, Val771, His772, Ser773, Gln813, and Glu825. Residues Gln813, Glu825, and Asn827 each coordinate Mg(2+). Mn(2+) contacts are provided by Gln813, Glu825, and Asn827. An MGS-like domain is found at 911 to 1044 (SILRDIKSVF…IDYREISSYH (134 aa)). The allosteric domain stretch occupies residues 916-1044 (IKSVFISVRD…IDYREISSYH (129 aa)).

Belongs to the CarB family. Composed of two chains; the small (or glutamine) chain promotes the hydrolysis of glutamine to ammonia, which is used by the large (or ammonia) chain to synthesize carbamoyl phosphate. Tetramer of heterodimers (alpha,beta)4. The cofactor is Mg(2+). Requires Mn(2+) as cofactor.

The catalysed reaction is hydrogencarbonate + L-glutamine + 2 ATP + H2O = carbamoyl phosphate + L-glutamate + 2 ADP + phosphate + 2 H(+). The enzyme catalyses hydrogencarbonate + NH4(+) + 2 ATP = carbamoyl phosphate + 2 ADP + phosphate + 2 H(+). The protein operates within amino-acid biosynthesis; L-arginine biosynthesis; carbamoyl phosphate from bicarbonate: step 1/1. Its pathway is pyrimidine metabolism; UMP biosynthesis via de novo pathway; (S)-dihydroorotate from bicarbonate: step 1/3. Functionally, large subunit of the glutamine-dependent carbamoyl phosphate synthetase (CPSase). CPSase catalyzes the formation of carbamoyl phosphate from the ammonia moiety of glutamine, carbonate, and phosphate donated by ATP, constituting the first step of 2 biosynthetic pathways, one leading to arginine and/or urea and the other to pyrimidine nucleotides. The large subunit (synthetase) binds the substrates ammonia (free or transferred from glutamine from the small subunit), hydrogencarbonate and ATP and carries out an ATP-coupled ligase reaction, activating hydrogencarbonate by forming carboxy phosphate which reacts with ammonia to form carbamoyl phosphate. The polypeptide is Carbamoyl phosphate synthase large chain (Thermoplasma volcanium (strain ATCC 51530 / DSM 4299 / JCM 9571 / NBRC 15438 / GSS1)).